The chain runs to 312 residues: Olfactory receptor 14C36 (312 aa).

The Extracellular segment spans residues 1-23 (MPNSTTVMEFLLMRFSDVWTLQI). N-linked (GlcNAc...) asparagine glycosylation is present at Asn3. Residues 24–44 (LHSASFFMLYLVTLMGNILIV) form a helical membrane-spanning segment. Residues 45-52 (TVTTCDSS) lie on the Cytoplasmic side of the membrane. Residues 53–73 (LHMPMYFFLRNLSILDACYIS) traverse the membrane as a helical segment. At 74–97 (VTVPTSCVNSLLDSTTISKAGCVA) the chain is on the extracellular side. The cysteines at positions 95 and 187 are disulfide-linked. A helical membrane pass occupies residues 98 to 118 (QVFLVVFFVYVELLFLTIMAH). Residues 119–137 (DRYVAVCQPLHYPVIVNSR) are Cytoplasmic-facing. The chain crosses the membrane as a helical span at residues 138 to 158 (ICIQMTLASLLSGLVYAGMHT). Over 159–194 (GSTFQLPFCRSNVIHQFFCDIPSLLKLSCSDTFSNE) the chain is Extracellular. Residues 195-215 (VMIVVSALGVGGGCFIFIIRS) form a helical membrane-spanning segment. The Cytoplasmic portion of the chain corresponds to 216 to 235 (YIHIFSTVLGFPRGADRTKA). The chain crosses the membrane as a helical span at residues 236–256 (FSTCIPHILVVSVFLSSCSSV). The Extracellular segment spans residues 257 to 269 (YLRPPAIPAATQD). A helical transmembrane segment spans residues 270-290 (LILSGFYSIMPPLFNPIIYSL). At 291 to 312 (RNKQIKVAIKKIMKRIFYSENV) the chain is on the cytoplasmic side.

The protein belongs to the G-protein coupled receptor 1 family.

It localises to the cell membrane. Functionally, odorant receptor. This chain is Olfactory receptor 14C36 (OR14C36), found in Homo sapiens (Human).